Consider the following 412-residue polypeptide: Glucose-1-phosphate adenylyltransferase (412 aa).

Residues glycine 169, 184 to 185 (EK), and serine 201 each bind alpha-D-glucose 1-phosphate.

Belongs to the bacterial/plant glucose-1-phosphate adenylyltransferase family. As to quaternary structure, homotetramer.

The enzyme catalyses alpha-D-glucose 1-phosphate + ATP + H(+) = ADP-alpha-D-glucose + diphosphate. It participates in glycan biosynthesis; glycogen biosynthesis. Its function is as follows. Involved in the biosynthesis of ADP-glucose, a building block required for the elongation reactions to produce glycogen. Catalyzes the reaction between ATP and alpha-D-glucose 1-phosphate (G1P) to produce pyrophosphate and ADP-Glc. This is Glucose-1-phosphate adenylyltransferase from Geobacter metallireducens (strain ATCC 53774 / DSM 7210 / GS-15).